The following is an 83-amino-acid chain: Probable calcium-binding protein CML28 (83 aa).

2 consecutive EF-hand domains span residues 5 to 40 (TEKA…LGSV) and 43 to 75 (EDIK…NRGL). Ca(2+)-binding residues include D18, N20, D22, K24, E29, D53, D55, D57, Y59, and E64.

Potential calcium sensor. In Arabidopsis thaliana (Mouse-ear cress), this protein is Probable calcium-binding protein CML28 (CML28).